The primary structure comprises 495 residues: MNQHFDVLIIGAGLSGIGTACHVTAEFPDKTIALLERRERLGGTWDLFRYPGVRSDSDMFTFGYKFRPWRDVKVLADGASIRQYIADTATEFGVDEKIHYGLKVNTAEWSSRQCRWTVAGVHEATGETRTYTCDYLISCTGYYNYDAGYLPDFPGVHRFGGRCVHPQHWPEDLDYSGKKVVVIGSGATAVTLVPAMAGSNPGSAAHVTMLQRSPSYIFSLPAVDKISEVLGRFLPDRWVYEFGRRRNIAIQRKLYQACRRWPKLMRRLLLWEVRRRLGRSVDMSNFTPNYLPWDERLCAVPNGDLFKTLASGAASVVTDQIETFTEKGILCKSGREIEADIIVTATGLNIQMLGGMRLIVDGAEYQLPEKMTYKGVLLENAPNLAWIIGYTNASWTLKSDIAGAYLCRLLRHMADNGYTVATPRDAQDCALDVGMFDQLNSGYVKRGQDIMPRQGSKHPWRVLMHYEKDAKILLEDPIDDGVLHFAAAAQDHAAA.

Residues Ser15, Glu36, Trp45, 56–57, and Val104 contribute to the FAD site; that span reads DS.

The protein belongs to the FAD-binding monooxygenase family. Requires FAD as cofactor.

Its function is as follows. Required for maintaining the appropriate mycolic acid composition and permeability of the envelope on its exposure to acidic pH. The protein is Putative FAD-containing monooxygenase MymA (mymA) of Mycobacterium tuberculosis (strain CDC 1551 / Oshkosh).